Consider the following 211-residue polypeptide: Protein-L-isoaspartate O-methyltransferase (211 aa).

Residue S62 is part of the active site.

It belongs to the methyltransferase superfamily. L-isoaspartyl/D-aspartyl protein methyltransferase family.

Its subcellular location is the cytoplasm. It carries out the reaction [protein]-L-isoaspartate + S-adenosyl-L-methionine = [protein]-L-isoaspartate alpha-methyl ester + S-adenosyl-L-homocysteine. Catalyzes the methyl esterification of L-isoaspartyl residues in peptides and proteins that result from spontaneous decomposition of normal L-aspartyl and L-asparaginyl residues. It plays a role in the repair and/or degradation of damaged proteins. The chain is Protein-L-isoaspartate O-methyltransferase from Shewanella oneidensis (strain ATCC 700550 / JCM 31522 / CIP 106686 / LMG 19005 / NCIMB 14063 / MR-1).